A 282-amino-acid polypeptide reads, in one-letter code: 1-deoxy-11-beta-hydroxypentalenate dehydrogenase (282 aa).

12-36 (GAASGIGLALSARFARAGAGVVMAD) lines the NAD(+) pocket. Ser-144 is a binding site for substrate. Tyr-157 serves as the catalytic Proton acceptor. Residue Lys-161 participates in NAD(+) binding. A disordered region spans residues 258 to 282 (PPPSPEEELWPVPKTTTATTATTKH). Over residues 267–282 (WPVPKTTTATTATTKH) the composition is skewed to low complexity.

The protein belongs to the short-chain dehydrogenases/reductases (SDR) family.

It catalyses the reaction 1-deoxy-11beta-hydroxypentalenate + NAD(+) = 1-deoxy-11-oxopentalenate + NADH + H(+). The protein operates within antibiotic biosynthesis; pentalenolactone biosynthesis. Catalyzes the oxidation of 1-deoxy-11-beta-hydroxypentalenic acid to 1-deoxy-11-oxopentalenic acid in the biosynthesis of pentalenolactone antibiotic. The chain is 1-deoxy-11-beta-hydroxypentalenate dehydrogenase (pntF) from Streptomyces arenae.